A 400-amino-acid chain; its full sequence is Argininosuccinate synthase (400 aa).

ATP-binding positions include 11-19 and Ala-38; that span reads AYSGGLDTS. 2 residues coordinate L-citrulline: Tyr-89 and Ser-94. Gly-119 serves as a coordination point for ATP. Residues Thr-121, Asn-125, and Asp-126 each coordinate L-aspartate. Residue Asn-125 coordinates L-citrulline. Residues Arg-129, Ser-179, Ser-188, Glu-264, and Tyr-276 each contribute to the L-citrulline site.

Belongs to the argininosuccinate synthase family. Type 1 subfamily. As to quaternary structure, homotetramer.

The protein resides in the cytoplasm. The enzyme catalyses L-citrulline + L-aspartate + ATP = 2-(N(omega)-L-arginino)succinate + AMP + diphosphate + H(+). It participates in amino-acid biosynthesis; L-arginine biosynthesis; L-arginine from L-ornithine and carbamoyl phosphate: step 2/3. The sequence is that of Argininosuccinate synthase from Oleidesulfovibrio alaskensis (strain ATCC BAA-1058 / DSM 17464 / G20) (Desulfovibrio alaskensis).